The following is a 327-amino-acid chain: Methionyl-tRNA formyltransferase (327 aa).

121–124 is a binding site for (6S)-5,6,7,8-tetrahydrofolate; the sequence is SLLP.

The protein belongs to the Fmt family.

It carries out the reaction L-methionyl-tRNA(fMet) + (6R)-10-formyltetrahydrofolate = N-formyl-L-methionyl-tRNA(fMet) + (6S)-5,6,7,8-tetrahydrofolate + H(+). Its function is as follows. Attaches a formyl group to the free amino group of methionyl-tRNA(fMet). The formyl group appears to play a dual role in the initiator identity of N-formylmethionyl-tRNA by promoting its recognition by IF2 and preventing the misappropriation of this tRNA by the elongation apparatus. This Paraburkholderia phymatum (strain DSM 17167 / CIP 108236 / LMG 21445 / STM815) (Burkholderia phymatum) protein is Methionyl-tRNA formyltransferase.